A 196-amino-acid polypeptide reads, in one-letter code: Protein LSM12 homolog B (196 aa).

The 68-residue stretch at 3–70 folds into the Sm domain; sequence APGPGEYFSV…LAYVSEVDII (68 aa). Residues 81 to 175 enclose the AD domain; it reads ASLNFNKLVN…IVEKHFRDVE (95 aa).

The protein belongs to the LSM12 family.

This Danio rerio (Zebrafish) protein is Protein LSM12 homolog B (lsm12b).